The sequence spans 268 residues: Tropinone reductase homolog At2g29150 (268 aa).

22-46 lines the NADP(+) pocket; it reads LVTGGSKGLGEAVVEELAMLGARVH. Ser-155 provides a ligand contact to substrate. Residue Tyr-167 is the Proton acceptor of the active site.

It belongs to the short-chain dehydrogenases/reductases (SDR) family. SDR65C subfamily.

Functionally, enantiospecific reductase active on cyclic monoterpenes and small flexible lipophilic carbonyls. No activity with tropinone, nitrogen-containing tropinone analogs, tropine or pseudotropine as substrate. This Arabidopsis thaliana (Mouse-ear cress) protein is Tropinone reductase homolog At2g29150.